The sequence spans 350 residues: Putative deoxyribonuclease-2 (350 aa).

It belongs to the DNase II family.

The protein is Putative deoxyribonuclease-2 of Burkholderia thailandensis (strain ATCC 700388 / DSM 13276 / CCUG 48851 / CIP 106301 / E264).